Here is a 376-residue protein sequence, read N- to C-terminus: Enoyl-[acyl-carrier-protein] reductase, mitochondrial (376 aa).

Tyr72 acts as the Proton donor in catalysis. Residues Asn154, 182–185 (TSAV), 205–207 (RDR), 280–283 (YGGM), 305–307 (YWI), and Lys369 contribute to the NADP(+) site.

The protein belongs to the zinc-containing alcohol dehydrogenase family. Quinone oxidoreductase subfamily. Homodimer.

It localises to the mitochondrion matrix. The catalysed reaction is a 2,3-saturated acyl-[ACP] + NADP(+) = a (2E)-enoyl-[ACP] + NADPH + H(+). Functionally, catalyzes the NADPH-dependent reduction of trans-2-enoyl thioesters in mitochondrial fatty acid synthesis (fatty acid synthesis type II). Fatty acid chain elongation in mitochondria uses acyl carrier protein (ACP) as an acyl group carrier, but the enzyme accepts both ACP and CoA thioesters as substrates in vitro. Required for respiration and the maintenance of the mitochondrial compartment. The sequence is that of Enoyl-[acyl-carrier-protein] reductase, mitochondrial (ETR1) from Eremothecium gossypii (strain ATCC 10895 / CBS 109.51 / FGSC 9923 / NRRL Y-1056) (Yeast).